The primary structure comprises 398 residues: Tryptophan synthase beta chain (398 aa).

Lysine 92 is subject to N6-(pyridoxal phosphate)lysine.

This sequence belongs to the TrpB family. Tetramer of two alpha and two beta chains. It depends on pyridoxal 5'-phosphate as a cofactor.

It catalyses the reaction (1S,2R)-1-C-(indol-3-yl)glycerol 3-phosphate + L-serine = D-glyceraldehyde 3-phosphate + L-tryptophan + H2O. It functions in the pathway amino-acid biosynthesis; L-tryptophan biosynthesis; L-tryptophan from chorismate: step 5/5. In terms of biological role, the beta subunit is responsible for the synthesis of L-tryptophan from indole and L-serine. This chain is Tryptophan synthase beta chain, found in Nitrosospira multiformis (strain ATCC 25196 / NCIMB 11849 / C 71).